The chain runs to 272 residues: Putative pyruvate, phosphate dikinase regulatory protein (272 aa).

ADP is bound at residue 154 to 161; the sequence is GVSRTSKS.

This sequence belongs to the pyruvate, phosphate/water dikinase regulatory protein family. PDRP subfamily.

It carries out the reaction N(tele)-phospho-L-histidyl/L-threonyl-[pyruvate, phosphate dikinase] + ADP = N(tele)-phospho-L-histidyl/O-phospho-L-threonyl-[pyruvate, phosphate dikinase] + AMP + H(+). The catalysed reaction is N(tele)-phospho-L-histidyl/O-phospho-L-threonyl-[pyruvate, phosphate dikinase] + phosphate + H(+) = N(tele)-phospho-L-histidyl/L-threonyl-[pyruvate, phosphate dikinase] + diphosphate. In terms of biological role, bifunctional serine/threonine kinase and phosphorylase involved in the regulation of the pyruvate, phosphate dikinase (PPDK) by catalyzing its phosphorylation/dephosphorylation. This is Putative pyruvate, phosphate dikinase regulatory protein from Wolbachia pipientis subsp. Culex pipiens (strain wPip).